Here is a 377-residue protein sequence, read N- to C-terminus: Flagellin D (377 aa).

Coiled-coil stretches lie at residues 103–129 (SNSK…IAET) and 310–339 (AFQN…IKDT).

This sequence belongs to the bacterial flagellin family. As to quaternary structure, heteromer of multiple flagellin subunits including FlaA, FlaB, FlaC, FlaD and FlaE.

Its subcellular location is the secreted. The protein localises to the bacterial flagellum. Functionally, flagellin is the subunit protein which polymerizes to form the filaments of bacterial flagella. FlaD is not essential for flagellar synthesis and motility. The sequence is that of Flagellin D (flaD) from Vibrio cholerae serotype O1 (strain ATCC 39315 / El Tor Inaba N16961).